A 339-amino-acid polypeptide reads, in one-letter code: Uroporphyrinogen decarboxylase (339 aa).

Residues 21 to 25 (RQAGR), Asp71, Tyr147, Ser202, and His315 contribute to the substrate site.

It belongs to the uroporphyrinogen decarboxylase family. As to quaternary structure, homodimer.

It is found in the cytoplasm. The enzyme catalyses uroporphyrinogen III + 4 H(+) = coproporphyrinogen III + 4 CO2. The protein operates within porphyrin-containing compound metabolism; protoporphyrin-IX biosynthesis; coproporphyrinogen-III from 5-aminolevulinate: step 4/4. Catalyzes the decarboxylation of four acetate groups of uroporphyrinogen-III to yield coproporphyrinogen-III. In Helicobacter pylori (strain P12), this protein is Uroporphyrinogen decarboxylase.